The chain runs to 132 residues: Small ribosomal subunit protein uS8 (132 aa).

This sequence belongs to the universal ribosomal protein uS8 family. As to quaternary structure, part of the 30S ribosomal subunit. Contacts proteins S5 and S12.

Functionally, one of the primary rRNA binding proteins, it binds directly to 16S rRNA central domain where it helps coordinate assembly of the platform of the 30S subunit. The sequence is that of Small ribosomal subunit protein uS8 from Rhodopseudomonas palustris (strain HaA2).